We begin with the raw amino-acid sequence, 413 residues long: Serine hydroxymethyltransferase (413 aa).

(6S)-5,6,7,8-tetrahydrofolate contacts are provided by residues Leu-117 and 121–123; that span reads GHL. Position 226 is an N6-(pyridoxal phosphate)lysine (Lys-226). (6S)-5,6,7,8-tetrahydrofolate is bound at residue 349–351; sequence SPF.

This sequence belongs to the SHMT family. Homodimer. The cofactor is pyridoxal 5'-phosphate.

It is found in the cytoplasm. The enzyme catalyses (6R)-5,10-methylene-5,6,7,8-tetrahydrofolate + glycine + H2O = (6S)-5,6,7,8-tetrahydrofolate + L-serine. It participates in one-carbon metabolism; tetrahydrofolate interconversion. It functions in the pathway amino-acid biosynthesis; glycine biosynthesis; glycine from L-serine: step 1/1. In terms of biological role, catalyzes the reversible interconversion of serine and glycine with tetrahydrofolate (THF) serving as the one-carbon carrier. This reaction serves as the major source of one-carbon groups required for the biosynthesis of purines, thymidylate, methionine, and other important biomolecules. Also exhibits THF-independent aldolase activity toward beta-hydroxyamino acids, producing glycine and aldehydes, via a retro-aldol mechanism. The chain is Serine hydroxymethyltransferase from Pelobacter propionicus (strain DSM 2379 / NBRC 103807 / OttBd1).